The chain runs to 370 residues: Molybdenum import ATP-binding protein ModC (370 aa).

One can recognise an ABC transporter domain in the interval 2–233 (SVRVDIGHRL…LDLLPAEERG (232 aa)). Residue 31–38 (GPSGSGKT) participates in ATP binding. One can recognise a Mop domain in the interval 293–359 (GLSALNILPG…VKTVSFDRAN (67 aa)).

It belongs to the ABC transporter superfamily. Molybdate importer (TC 3.A.1.8) family. As to quaternary structure, the complex is composed of two ATP-binding proteins (ModC), two transmembrane proteins (ModB) and a solute-binding protein (ModA).

It is found in the cell inner membrane. It catalyses the reaction molybdate(out) + ATP + H2O = molybdate(in) + ADP + phosphate + H(+). In terms of biological role, part of the ABC transporter complex ModABC involved in molybdenum import. Responsible for energy coupling to the transport system. The chain is Molybdenum import ATP-binding protein ModC from Mesorhizobium japonicum (strain LMG 29417 / CECT 9101 / MAFF 303099) (Mesorhizobium loti (strain MAFF 303099)).